A 110-amino-acid chain; its full sequence is IQ domain-containing protein J (110 aa).

The 21-residue stretch at 47-67 (ESKVKIIQRAWREYLQRQDPL) folds into the IQ domain. The disordered stretch occupies residues 63–99 (RQDPLEKRSPSPPSVSSDKLSSSVSMNTFSDSSTPVS). Low complexity predominate over residues 76-87 (SVSSDKLSSSVS). The segment covering 88-99 (MNTFSDSSTPVS) has biased composition (polar residues).

This Mus musculus (Mouse) protein is IQ domain-containing protein J.